Consider the following 454-residue polypeptide: Argininosuccinate lyase (454 aa).

This sequence belongs to the lyase 1 family. Argininosuccinate lyase subfamily.

Its subcellular location is the cytoplasm. The enzyme catalyses 2-(N(omega)-L-arginino)succinate = fumarate + L-arginine. It functions in the pathway amino-acid biosynthesis; L-arginine biosynthesis; L-arginine from L-ornithine and carbamoyl phosphate: step 3/3. This is Argininosuccinate lyase from Herpetosiphon aurantiacus (strain ATCC 23779 / DSM 785 / 114-95).